Consider the following 830-residue polypeptide: P-selectin (830 aa).

Residues M1–A41 form the signal peptide. The Extracellular segment spans residues W42–A771. Residues N54 and N98 are each glycosylated (N-linked (GlcNAc...) asparagine). Residues K58–C158 enclose the C-type lectin domain. 23 cysteine pairs are disulfide-bonded: C60/C158, C131/C150, C163/C174, C168/C183, C185/C194, C200/C244, C230/C257, C262/C306, C292/C319, C324/C368, C354/C381, C386/C430, C416/C443, C448/C492, C478/C505, C510/C554, C540/C567, C572/C616, C602/C629, C642/C686, C672/C699, C704/C748, and C734/C761. Ca(2+) contacts are provided by E121, N123, and N124. N123 lines the a carbohydrate pocket. The a carbohydrate site is built by E133 and N146. Positions 146 and 147 each coordinate Ca(2+). Residues Y159–E195 enclose the EGF-like domain. N-linked (GlcNAc...) asparagine glycosylation occurs at N180. Sushi domains are found at residues R198–A259, A260–A321, V322–A383, I384–A445, L446–A507, I508–A569, I570–G631, V640–A701, and V702–A763. N-linked (GlcNAc...) asparagine glycosylation is found at N212 and N219. N-linked (GlcNAc...) asparagine glycosylation occurs at N411. A glycan (N-linked (GlcNAc...) asparagine) is linked at N460. An N-linked (GlcNAc...) asparagine glycan is attached at N518. N-linked (GlcNAc...) asparagine glycosylation occurs at N665. Residues N716, N723, and N741 are each glycosylated (N-linked (GlcNAc...) asparagine). A helical membrane pass occupies residues L772–L795. Over R796 to P830 the chain is Cytoplasmic. C807 is lipidated: S-palmitoyl cysteine; alternate. C807 carries the S-stearoyl cysteine; alternate lipid modification. Residues Y818–F821 carry the Endocytosis signal motif. Residues F821 to P830 form an interaction with SNX17 region.

The protein belongs to the selectin/LECAM family. As to quaternary structure, interacts with SNX17. Interacts with SELPLG/PSGL1 and PODXL2 and mediates neutrophil adhesion and leukocyte rolling. This interaction requires the sialyl-Lewis X epitope of SELPLG and PODXL2, and specific tyrosine sulfation on SELPLG. Interacts (via C-type lectin domain) with alpha-IIb/beta3 integrin ITGA2B:ITGB3 and alpha-V/beta-3 integrin ITGAV:ITGB3. Interacts with alpha5/beta1 integrin ITGA5:ITGB1 and alpha4/beta1 integrin ITGA4:ITGB. Stored in the alpha-granules of platelets and Weibel-Palade bodies of endothelial cells. Upon cell activation by agonists, P-selectin is transported rapidly to the cell surface.

It localises to the cell membrane. In terms of biological role, ca(2+)-dependent receptor for myeloid cells that binds to carbohydrates on neutrophils and monocytes. Mediates the interaction of activated endothelial cells or platelets with leukocytes. The ligand recognized is sialyl-Lewis X. Mediates rapid rolling of leukocyte rolling over vascular surfaces during the initial steps in inflammation through interaction with SELPLG. Mediates cell-cell interactions and cell adhesion via the interaction with integrin alpha-IIb/beta3 (ITGA2B:ITGB3) and integrin alpha-V/beta-3 (ITGAV:ITGB3). The protein is P-selectin (SELP) of Homo sapiens (Human).